The primary structure comprises 96 residues: Nucleoid-associated protein CCA_00330 (96 aa).

Belongs to the YbaB/EbfC family. Homodimer.

It is found in the cytoplasm. Its subcellular location is the nucleoid. Functionally, binds to DNA and alters its conformation. May be involved in regulation of gene expression, nucleoid organization and DNA protection. In Chlamydia caviae (strain ATCC VR-813 / DSM 19441 / 03DC25 / GPIC) (Chlamydophila caviae), this protein is Nucleoid-associated protein CCA_00330.